Consider the following 416-residue polypeptide: Interleukin-1 receptor type 2 (416 aa).

Positions 1 to 13 (MFILLVLVTGVSA) are cleaved as a signal peptide. Residues 14-355 (FTTPAVVHTG…FQSLHTTVKE (342 aa)) are Extracellular-facing. Ig-like C2-type domains follow at residues 29–136 (PVTS…LELK), 146–233 (PLVS…YNIT), and 249–357 (PVII…KEVS). Intrachain disulfides connect C42–C128, C64–C120, and C164–C219. 4 N-linked (GlcNAc...) asparagine glycosylation sites follow: N124, N208, N231, and N289. C270 and C338 are disulfide-bonded. A helical membrane pass occupies residues 356–381 (VSSTFSWGIALAPLSLIILVVGAIWI). Residues 382-416 (RRRCKRQAGKTYGLTKLPTDNQDFPSSPNQIKEMK) lie on the Cytoplasmic side of the membrane. The disordered stretch occupies residues 396 to 416 (TKLPTDNQDFPSSPNQIKEMK). Residues 399–416 (PTDNQDFPSSPNQIKEMK) show a composition bias toward polar residues.

The protein belongs to the interleukin-1 receptor family. As to quaternary structure, associates with IL1RAP to form a non-signaling interleukin-1 receptor complex. A soluble form (sIL1R2) can also be produced by proteolytic cleavage at the cell surface (shedding) involving a metalloproteinase.

Its subcellular location is the membrane. The protein localises to the cell membrane. It localises to the secreted. Functionally, non-signaling receptor for IL1A, IL1B and IL1RN. Reduces IL1B activities. Serves as a decoy receptor by competitive binding to IL1B and preventing its binding to IL1R1. Also modulates cellular response through non-signaling association with IL1RAP after binding to IL1B. IL1R2 (membrane and secreted forms) preferentially binds IL1B and poorly IL1A and IL1RN. The secreted IL1R2 recruits secreted IL1RAP with high affinity; this complex formation may be the dominant mechanism for neutralization of IL1B by secreted/soluble receptors. The sequence is that of Interleukin-1 receptor type 2 (Il1r2) from Rattus norvegicus (Rat).